The chain runs to 236 residues: UPF0257 lipoprotein YnfC (236 aa).

Positions 1 to 16 (MKKPLLLTLLCMILAG) are cleaved as a signal peptide. Cysteine 17 carries N-palmitoyl cysteine lipidation. Cysteine 17 is lipidated: S-diacylglycerol cysteine.

It belongs to the UPF0257 family.

The protein resides in the cell membrane. This Salmonella heidelberg (strain SL476) protein is UPF0257 lipoprotein YnfC.